Consider the following 506-residue polypeptide: Tabersonine 3-oxygenase (506 aa).

The Lumenal segment spans residues 1–5 (MEFHE). A helical membrane pass occupies residues 6–26 (SSPFVFITRGFIFIAISIAVL). The Cytoplasmic segment spans residues 27–506 (RRIISKKTKT…DLQLIATSYA (480 aa)). Heme is bound at residue Cys-450.

Belongs to the cytochrome P450 family. Heme serves as cofactor. In terms of tissue distribution, expressed in leaf epidermis.

It is found in the endoplasmic reticulum membrane. It carries out the reaction 16-methoxytabersonine + reduced [NADPH--hemoprotein reductase] + O2 = (3R)-1,2-didehydro-3-hydroxy-16-methoxy-2,3-dihydrotabersonine + oxidized [NADPH--hemoprotein reductase] + H2O + H(+). The enzyme catalyses (-)-tabersonine + reduced [NADPH--hemoprotein reductase] + O2 = (3R)-1,2-didehydro-3-hydroxy-2,3-dihydrotabersonine + oxidized [NADPH--hemoprotein reductase] + H2O + H(+). Its pathway is alkaloid biosynthesis; vindoline biosynthesis. In terms of biological role, cytochrome P450 catalyzing the monooxygenation of 16-methoxytabersonine, 16-hydroxytabersonine and tabersonine, but not of 2,3-dihydrotabersonine. Converts the C2,C3 alkene of tabersonine and 16-methoxytabersonine to the epoxides, which then spontaneously open to form the corresponding imine alcohols. Inactive in converting amyrin to ursolic acid. The sequence is that of Tabersonine 3-oxygenase from Catharanthus roseus (Madagascar periwinkle).